The primary structure comprises 261 residues: Undecaprenyl-diphosphatase (261 aa).

Transmembrane regions (helical) follow at residues 1 to 21 (MNYI…FLPV), 41 to 61 (FTKL…VVLY), 69 to 89 (LDFY…GLLF), 95 to 115 (ALLE…IILL), 129 to 149 (ITYL…IPGV), 169 to 186 (AAEF…GATL), 206 to 226 (ILII…KTFI), and 241 to 261 (RIVA…LTLI).

The protein belongs to the UppP family.

The protein localises to the cell inner membrane. The enzyme catalyses di-trans,octa-cis-undecaprenyl diphosphate + H2O = di-trans,octa-cis-undecaprenyl phosphate + phosphate + H(+). Catalyzes the dephosphorylation of undecaprenyl diphosphate (UPP). Confers resistance to bacitracin. The chain is Undecaprenyl-diphosphatase from Flavobacterium psychrophilum (strain ATCC 49511 / DSM 21280 / CIP 103535 / JIP02/86).